We begin with the raw amino-acid sequence, 751 residues long: Cytosolic neutral trehalase (751 aa).

Residues Met1–Pro10 are compositionally biased toward polar residues. The segment at Met1–Met59 is disordered. N-acetylserine is present on Ser2. Ser20 and Ser21 each carry phosphoserine; by PKA. Ser23 carries the phosphoserine modification. Over residues Gln45–Arg55 the composition is skewed to basic residues. The residue at position 58 (Thr58) is a Phosphothreonine. Position 60 is a phosphoserine; by PKA (Ser60). Ser66 carries the phosphoserine modification. The segment at Phe73–Gln92 is disordered. Position 83 is a phosphoserine; by PKA (Ser83). Ca(2+)-binding residues include Asp114, Asp116, Asn118, Gln120, and Asp125. Residues Arg302, Trp309–Asp310, Asn346, Arg355–Gln357, Glu424, Arg473, and Gly476 each bind substrate. Residues Asp478 and Glu674 each act as proton donor/acceptor in the active site.

The protein belongs to the glycosyl hydrolase 37 family. As to quaternary structure, monomer. Interacts with BMH1 dimers; the interaction is direct and activates NTH1. Interacts with BMH2. The cofactor is Ca(2+). In terms of processing, phosphorylated by protein kinase A (PKA); phosphorylation at Ser-60 and Ser-83 is required for activation by the 14-3-3 proteins BMH1 and BMH2.

The protein resides in the cytoplasm. It carries out the reaction alpha,alpha-trehalose + H2O = alpha-D-glucose + beta-D-glucose. The protein operates within carbohydrate degradation. With respect to regulation, activated by calcium. Activated by protein kinase A (PKA)-mediated phosphorylation. Functionally, hydrolyzes intracellular trehalose to glucose. The disaccharide trehalose serves as a storage carbohydrate that is mobilized during nutrient stress. Regulates the level of trehalose as a protectant for cell integrity during heat stress. The sequence is that of Cytosolic neutral trehalase from Saccharomyces cerevisiae (strain ATCC 204508 / S288c) (Baker's yeast).